Here is a 402-residue protein sequence, read N- to C-terminus: Probable sugar efflux transporter (402 aa).

12 helical membrane-spanning segments follow: residues valine 15–methionine 35, glycine 51–alanine 71, leucine 84–leucine 104, methionine 109–isoleucine 129, glutamine 137–glycine 157, valine 168–leucine 188, proline 209–tyrosine 229, asparagine 245–phenylalanine 265, phenylalanine 276–glutamate 296, alanine 297–leucine 317, valine 333–glycine 353, and isoleucine 365–leucine 385.

It belongs to the major facilitator superfamily. SotB (TC 2.A.1.2) family.

It is found in the cell inner membrane. Involved in the efflux of sugars. The physiological role may be the reduction of the intracellular concentration of toxic sugars or sugar metabolites. This Haemophilus influenzae (strain 86-028NP) protein is Probable sugar efflux transporter.